The following is a 336-amino-acid chain: Transmembrane protein 120A (336 aa).

The Cytoplasmic segment spans residues 1–131 (MNSPALQDCV…KQSKFAYKDE (131 aa)). Residue Lys129 coordinates CoA. The helical transmembrane segment at 132–151 (YEKFKLYLTMILMVLSFICR) threads the bilayer. Over 152–157 (FVLNSR) the chain is Extracellular. A helical transmembrane segment spans residues 158–176 (VTDAVFNFLLVWYYCTLTI). Residues 177-189 (RESILINNGSRIK) lie on the Cytoplasmic side of the membrane. CoA contacts are provided by Ser186 and Arg187. Residues 190 to 208 (GWWVLNHYISTFLSGVMLT) traverse the membrane as a helical segment. The Extracellular segment spans residues 209–217 (WPDGLMYQM). Residues 218-239 (FRNQFLSFSMYQSFVQFLQYYY) traverse the membrane as a helical segment. Residues Gln236, Tyr239, and Gln240 each contribute to the CoA site. Residues 240 to 269 (QSGCLYRLRALGERHNMDLTVEGFQSWMWR) lie on the Cytoplasmic side of the membrane. Residues 270 to 293 (GLTFLLPFLFFGQFWQLYNAITLF) form a helical membrane-spanning segment. The Extracellular segment spans residues 294–303 (KLARHPECKE). A helical transmembrane segment spans residues 304-329 (WQVIMCGLPFLVHFLGNFFTTLRVVH). Residues 330–336 (QKFQKQN) lie on the Cytoplasmic side of the membrane. Lys331 serves as a coordination point for CoA.

Belongs to the TMEM120 family. In terms of assembly, homodimer.

The protein resides in the cell membrane. It is found in the nucleus inner membrane. The protein localises to the endoplasmic reticulum. In terms of biological role, multifunctional protein involved in mechanosensation, and plays an essential role in lipid metabolism. May function as a potential ion channel involved in sensing mechanical stimuli. TMEM120A is structurally similar to a lipid-modifying enzyme, ELOVL7, and contains a bound coenzyme A molecule, which suggests it might function as an enzyme in lipid metabolism. In Xenopus tropicalis (Western clawed frog), this protein is Transmembrane protein 120A.